Consider the following 240-residue polypeptide: tRNA (guanine-N(1)-)-methyltransferase (240 aa).

Residues G110 and 129–134 contribute to the S-adenosyl-L-methionine site; that span reads LGDFVL.

The protein belongs to the RNA methyltransferase TrmD family. As to quaternary structure, homodimer.

The protein resides in the cytoplasm. The enzyme catalyses guanosine(37) in tRNA + S-adenosyl-L-methionine = N(1)-methylguanosine(37) in tRNA + S-adenosyl-L-homocysteine + H(+). Its function is as follows. Specifically methylates guanosine-37 in various tRNAs. The protein is tRNA (guanine-N(1)-)-methyltransferase of Clostridium botulinum (strain 657 / Type Ba4).